A 333-amino-acid chain; its full sequence is Glyceraldehyde-3-phosphate dehydrogenase (333 aa).

Residues 11–12, aspartate 33, arginine 78, and serine 120 each bind NAD(+); that span reads RI. D-glyceraldehyde 3-phosphate contacts are provided by residues 149–151, threonine 180, 209–210, and arginine 232; these read SCT and TG. The active-site Nucleophile is cysteine 150. S-nitrosocysteine is present on cysteine 150. Residue asparagine 314 participates in NAD(+) binding.

It belongs to the glyceraldehyde-3-phosphate dehydrogenase family. In terms of assembly, homotetramer. In terms of processing, S-nitrosylation of Cys-150 leads to translocation to the nucleus.

It localises to the cytoplasm. The protein resides in the cytosol. Its subcellular location is the cytoskeleton. The protein localises to the nucleus. The enzyme catalyses D-glyceraldehyde 3-phosphate + phosphate + NAD(+) = (2R)-3-phospho-glyceroyl phosphate + NADH + H(+). The catalysed reaction is S-nitroso-L-cysteinyl-[GAPDH] + L-cysteinyl-[protein] = L-cysteinyl-[GAPDH] + S-nitroso-L-cysteinyl-[protein]. The protein operates within carbohydrate degradation; glycolysis; pyruvate from D-glyceraldehyde 3-phosphate: step 1/5. Has both glyceraldehyde-3-phosphate dehydrogenase and nitrosylase activities, thereby playing a role in glycolysis and nuclear functions, respectively. Glyceraldehyde-3-phosphate dehydrogenase is a key enzyme in glycolysis that catalyzes the first step of the pathway by converting D-glyceraldehyde 3-phosphate (G3P) into 3-phospho-D-glyceroyl phosphate. Participates in nuclear events including transcription, RNA transport, DNA replication and apoptosis. Nuclear functions are probably due to the nitrosylase activity that mediates cysteine S-nitrosylation of nuclear target proteins such as SIRT1, HDAC2 and PRKDC. In Danio rerio (Zebrafish), this protein is Glyceraldehyde-3-phosphate dehydrogenase.